Consider the following 350-residue polypeptide: Twinfilin-1 (350 aa).

The residue at position 2 (Ser2) is an N-acetylserine. An ADF-H 1 domain is found at 2-139 (SHQTGIQASE…SLHGYKKYLL (138 aa)). Phosphoserine occurs at positions 143 and 277. Residues 177–313 (GVAFPISQEA…TADFLYEEVH (137 aa)) form the ADF-H 2 domain. Phosphotyrosine is present on Tyr309. Residues 316–350 (QHAHKQSFAKPKGPSGKRGIRRIIRGPAETEATTE) are disordered. Thr349 carries the phosphothreonine modification.

The protein belongs to the actin-binding proteins ADF family. Twinfilin subfamily. Interacts with G-actin; ADP-actin form and capping protein (CP). May also be able to interact with TWF2 and phosphoinositides, PI(4,5)P2. When bound to PI(4,5)P2, it is down-regulated. Interacts with ACTG1. Phosphorylated on serine and threonine residues.

It is found in the cytoplasm. The protein localises to the cytoskeleton. In terms of biological role, actin-binding protein involved in motile and morphological processes. Inhibits actin polymerization, likely by sequestering G-actin. By capping the barbed ends of filaments, it also regulates motility. Seems to play an important role in clathrin-mediated endocytosis and distribution of endocytic organelles. The sequence is that of Twinfilin-1 (TWF1) from Bos taurus (Bovine).